The chain runs to 268 residues: Glucosamine-6-phosphate deaminase (268 aa).

The active-site Proton acceptor; for enolization step is the D72. Catalysis depends on D141, which acts as the For ring-opening step. Residue H143 is the Proton acceptor; for ring-opening step of the active site. The active-site For ring-opening step is E148.

The protein belongs to the glucosamine/galactosamine-6-phosphate isomerase family. NagB subfamily. As to quaternary structure, homohexamer.

It catalyses the reaction alpha-D-glucosamine 6-phosphate + H2O = beta-D-fructose 6-phosphate + NH4(+). It participates in amino-sugar metabolism; N-acetylneuraminate degradation; D-fructose 6-phosphate from N-acetylneuraminate: step 5/5. Its activity is regulated as follows. Allosterically activated by N-acetylglucosamine 6-phosphate (GlcNAc6P). Its function is as follows. Catalyzes the reversible isomerization-deamination of glucosamine 6-phosphate (GlcN6P) to form fructose 6-phosphate (Fru6P) and ammonium ion. This Proteus mirabilis (strain HI4320) protein is Glucosamine-6-phosphate deaminase.